Reading from the N-terminus, the 83-residue chain is Putative membrane protein insertion efficiency factor (83 aa).

The tract at residues 63–83 is disordered; that stretch reads GGNDPVPDHFSLRRNKTDISD. The span at 68–83 shows a compositional bias: basic and acidic residues; it reads VPDHFSLRRNKTDISD.

It belongs to the UPF0161 family.

It localises to the cell membrane. In terms of biological role, could be involved in insertion of integral membrane proteins into the membrane. In Streptococcus agalactiae serotype III (strain NEM316), this protein is Putative membrane protein insertion efficiency factor.